The chain runs to 431 residues: Adenylosuccinate synthetase (431 aa).

GTP contacts are provided by residues 13–19 and 41–43; these read GDEGKGK and GHT. Residue Asp14 is the Proton acceptor of the active site. 2 residues coordinate Mg(2+): Asp14 and Gly41. Residues 14-17, 39-42, Thr130, Arg144, Gln225, Thr240, and Arg306 contribute to the IMP site; these read DEGK and NAGH. The Proton donor role is filled by His42. Residue 302 to 308 participates in substrate binding; sequence ATTGRQR. GTP-binding positions include Arg308, 334-336, and 416-418; these read KLD and STG.

It belongs to the adenylosuccinate synthetase family. In terms of assembly, homodimer. The cofactor is Mg(2+).

The protein localises to the cytoplasm. The enzyme catalyses IMP + L-aspartate + GTP = N(6)-(1,2-dicarboxyethyl)-AMP + GDP + phosphate + 2 H(+). Its pathway is purine metabolism; AMP biosynthesis via de novo pathway; AMP from IMP: step 1/2. Plays an important role in the de novo pathway of purine nucleotide biosynthesis. Catalyzes the first committed step in the biosynthesis of AMP from IMP. The chain is Adenylosuccinate synthetase from Halorhodospira halophila (strain DSM 244 / SL1) (Ectothiorhodospira halophila (strain DSM 244 / SL1)).